The following is a 357-amino-acid chain: UDP-N-acetylglucosamine--N-acetylmuramyl-(pentapeptide) pyrophosphoryl-undecaprenol N-acetylglucosamine transferase (357 aa).

UDP-N-acetyl-alpha-D-glucosamine-binding positions include 12–14, N124, R163, S191, I245, 264–269, and Q290; these read TGG and ALTVSE.

It belongs to the glycosyltransferase 28 family. MurG subfamily.

The protein localises to the cell inner membrane. The enzyme catalyses di-trans,octa-cis-undecaprenyl diphospho-N-acetyl-alpha-D-muramoyl-L-alanyl-D-glutamyl-meso-2,6-diaminopimeloyl-D-alanyl-D-alanine + UDP-N-acetyl-alpha-D-glucosamine = di-trans,octa-cis-undecaprenyl diphospho-[N-acetyl-alpha-D-glucosaminyl-(1-&gt;4)]-N-acetyl-alpha-D-muramoyl-L-alanyl-D-glutamyl-meso-2,6-diaminopimeloyl-D-alanyl-D-alanine + UDP + H(+). Its pathway is cell wall biogenesis; peptidoglycan biosynthesis. In terms of biological role, cell wall formation. Catalyzes the transfer of a GlcNAc subunit on undecaprenyl-pyrophosphoryl-MurNAc-pentapeptide (lipid intermediate I) to form undecaprenyl-pyrophosphoryl-MurNAc-(pentapeptide)GlcNAc (lipid intermediate II). The protein is UDP-N-acetylglucosamine--N-acetylmuramyl-(pentapeptide) pyrophosphoryl-undecaprenol N-acetylglucosamine transferase of Nitrosospira multiformis (strain ATCC 25196 / NCIMB 11849 / C 71).